The chain runs to 122 residues: Small ribosomal subunit protein uS12cz/uS12cy (122 aa).

The protein belongs to the universal ribosomal protein uS12 family. Part of the 30S ribosomal subunit.

It is found in the plastid. It localises to the chloroplast. In terms of biological role, with S4 and S5 plays an important role in translational accuracy. Located at the interface of the 30S and 50S subunits. The sequence is that of Small ribosomal subunit protein uS12cz/uS12cy (rps12-A) from Triticum aestivum (Wheat).